A 261-amino-acid chain; its full sequence is DNA-directed RNA polymerase subunit Rpo3 (261 aa).

This sequence belongs to the archaeal Rpo3/eukaryotic RPB3 RNA polymerase subunit family. As to quaternary structure, part of the RNA polymerase complex.

Its subcellular location is the cytoplasm. The catalysed reaction is RNA(n) + a ribonucleoside 5'-triphosphate = RNA(n+1) + diphosphate. Functionally, DNA-dependent RNA polymerase (RNAP) catalyzes the transcription of DNA into RNA using the four ribonucleoside triphosphates as substrates. The protein is DNA-directed RNA polymerase subunit Rpo3 of Pyrococcus furiosus (strain ATCC 43587 / DSM 3638 / JCM 8422 / Vc1).